The sequence spans 1241 residues: MIENWPQKPEGSQWTDDQWKAVVANGRDILVAAAAGSGKTAVLVERIIKKIIREENPVDVDRLLVVTFTNAAAQEMKNRIGEALEKVLIDGPGSQHIRKQLSLLNKASISTIHSFCLQVIRGYYYMLDVDPRFRIANQTENELLKEEVLDDILEEEYGIEDNSIFFELVDRYTSDRSDDDLQRMILALHTESRAHPNPEKWLDKLVEAYDVEGKTIEDLVYASYLLEDVKFQLETAEKHIRKATELAMLPDGPAPRVETLQADLALLGTLSSAARGSWTSVYEAMQNVSWQTLKRIKKSDYNEDVVKRVDSLRNKAKDEVKKLQEELFSRRPESFLRDFQDMHPVLEKLVKLVKVFTERFQAIKRDKGMVDFTDLEHFCLQILSEQSEDGEMKPSAVALQYRNKFAEVLVDEYQDTNFVQESIIKFVTKDFESEGNLFMVGDVKQSIYRFRLAEPGLFLGKYKRFTQEGSGGGMKIDLAKNFRSRHEVLAGTNFIFKQIMGEEVGEIDYDADAELKLGASYPEGEDVAAELLCIQQTEEEVQDGEEGAEVEKAQLEARLMAQRIKAMVDSGYAVYDRKTDSMRPVQYRDFVILLRSMPWAPQIMEELKLQGIPVYADLATGYFEATEVNIMMNVFRVIDNPMQDIPLAAVLRSPIVGLNDEELATLRAHGKKGSFYEVMSSFLKGAPLEEEQELHDKLEWFYKLLQGWREFARQQSLSDLIWKVYGETGYYDFVGGLPAGKQRQANLRVLYDRARQYEATSFRGLFRFLRFIERILERGDDMGTARALGEQEDVVRIMTIHKSKGLEFPVVFVAGLGRRFNTQDLMKRFLLHKDFGFGSQFIDPRKRIKYTTLSQLAIKRKMKMELIAEEMRVLYVALTRAKEKLILIGTVKDANKEMEKWLDAREHSEWLLPDHIRAGASCYLDWIAPSLYRHRDSEMLLELGQGNIPGEIYEYSASWKVEVVEGKDLLAPEPVQEEKQELLEALRDKKAVPLESERKEEVYDRLMWKYGYEDATSHRAKQSVTEIKRNYQSEEGSDNAFIKKLRAPIKTRPRFMEKKGLTYAERGTAVHAVMQHVDLKKPITIEVLQEQIARMVNKELLTFEQAEEIAIEKVISFFDSDLGKRVLAAKSVEREVPFTMMLSAEEAYQDWQGKKGESILVQGVIDCMIEEEDGITLIDFKTDTIEGKFPGGFDQAKPTLEDRYKVQLSLYAKALEKSLKHPVKEKCLYFFDGNHVVNIEE.

In terms of domain architecture, UvrD-like helicase ATP-binding spans 12–485 (SQWTDDQWKA…IDLAKNFRSR (474 aa)). 33 to 40 (AAAGSGKT) contacts ATP. One can recognise a UvrD-like helicase C-terminal domain in the interval 505-805 (GEIDYDADAE…RIMTIHKSKG (301 aa)).

It belongs to the helicase family. AddA subfamily. As to quaternary structure, heterodimer of AddA and AddB/RexB. It depends on Mg(2+) as a cofactor.

The enzyme catalyses Couples ATP hydrolysis with the unwinding of duplex DNA by translocating in the 3'-5' direction.. The catalysed reaction is ATP + H2O = ADP + phosphate + H(+). The heterodimer acts as both an ATP-dependent DNA helicase and an ATP-dependent, dual-direction single-stranded exonuclease. Recognizes the chi site generating a DNA molecule suitable for the initiation of homologous recombination. The AddA nuclease domain is required for chi fragment generation; this subunit has the helicase and 3' -&gt; 5' nuclease activities. The sequence is that of ATP-dependent helicase/nuclease subunit A from Bacillus mycoides (strain KBAB4) (Bacillus weihenstephanensis).